Reading from the N-terminus, the 227-residue chain is LysM and putative peptidoglycan-binding domain-containing protein 1 (227 aa).

A compositionally biased stretch (pro residues) spans 1-11 (MASPSRQPPPG). A disordered region spans residues 1–20 (MASPSRQPPPGGSGLLHGSR). A phosphoserine mark is found at Ser23 and Ser33. The LysM domain maps to 40–84 (LEHQLEPGDTLAGLALKYGVTMEQIKRANRLYTNDSIFLKKTLYI). The segment at 95-150 (NGLDSEEEKDGEEEVRPSNDEVWPHSTERKKQETGAGRANGEVFPTPGQETPTPIH) is disordered. The segment covering 98-107 (DSEEEKDGEE) has biased composition (acidic residues). Residue Ser99 is modified to Phosphoserine. Over residues 108 to 127 (EVRPSNDEVWPHSTERKKQE) the composition is skewed to basic and acidic residues. Residues Ser166, Ser181, Ser194, and Ser212 each carry the phosphoserine modification. A disordered region spans residues 172-196 (AAQKLKKGESGVPGEDAGLHLSSPR).

The protein is LysM and putative peptidoglycan-binding domain-containing protein 1 (LYSMD1) of Macaca fascicularis (Crab-eating macaque).